Reading from the N-terminus, the 496-residue chain is Lysine--tRNA ligase (496 aa).

Positions 408 and 415 each coordinate Mg(2+).

Belongs to the class-II aminoacyl-tRNA synthetase family. Homodimer. Mg(2+) serves as cofactor.

The protein resides in the cytoplasm. It carries out the reaction tRNA(Lys) + L-lysine + ATP = L-lysyl-tRNA(Lys) + AMP + diphosphate. This Legionella pneumophila (strain Paris) protein is Lysine--tRNA ligase.